The sequence spans 178 residues: Gamma-crystallin S (178 aa).

N-acetylserine is present on serine 2. An N-terminal arm region spans residues 2–5; sequence SKAG. Beta/gamma crystallin 'Greek key' domains lie at 6-44 and 45-87; these read TKIT…RVEG and GTWA…RAVH. The interval 88-93 is connecting peptide; the sequence is LSSGGQ. 2 Beta/gamma crystallin 'Greek key' domains span residues 94 to 134 and 135 to 177; these read YKLQ…KVLE and GAWI…RRIV.

This sequence belongs to the beta/gamma-crystallin family. Monomer.

Its function is as follows. Crystallins are the dominant structural components of the vertebrate eye lens. The protein is Gamma-crystallin S (CRYGS) of Bos taurus (Bovine).